Consider the following 347-residue polypeptide: GMP reductase (347 aa).

108–131 serves as a coordination point for NADP(+); that stretch reads ADFAKTAQILALNPALNFVCIDVA. The K(+) site is built by Gly181 and Gly183. The active-site Thioimidate intermediate is the Cys186. Residue 216–239 participates in NADP(+) binding; it reads IVSDGGCTMPGDVAKAFGGGADFV.

This sequence belongs to the IMPDH/GMPR family. GuaC type 1 subfamily. As to quaternary structure, homotetramer.

It carries out the reaction IMP + NH4(+) + NADP(+) = GMP + NADPH + 2 H(+). Catalyzes the irreversible NADPH-dependent deamination of GMP to IMP. It functions in the conversion of nucleobase, nucleoside and nucleotide derivatives of G to A nucleotides, and in maintaining the intracellular balance of A and G nucleotides. This chain is GMP reductase, found in Salmonella arizonae (strain ATCC BAA-731 / CDC346-86 / RSK2980).